We begin with the raw amino-acid sequence, 262 residues long: Pyridoxine 5'-phosphate synthase (262 aa).

A 3-amino-2-oxopropyl phosphate-binding site is contributed by Asn-6. 8–9 provides a ligand contact to 1-deoxy-D-xylulose 5-phosphate; that stretch reads DH. Arg-17 serves as a coordination point for 3-amino-2-oxopropyl phosphate. The active-site Proton acceptor is the His-42. 1-deoxy-D-xylulose 5-phosphate is bound by residues Arg-44 and His-49. The Proton acceptor role is filled by Glu-69. Residue Thr-99 coordinates 1-deoxy-D-xylulose 5-phosphate. The active-site Proton donor is the His-213. Residues Gly-214 and 235–236 each bind 3-amino-2-oxopropyl phosphate; that span reads GH.

The protein belongs to the PNP synthase family. In terms of assembly, homooctamer; tetramer of dimers.

The protein localises to the cytoplasm. It catalyses the reaction 3-amino-2-oxopropyl phosphate + 1-deoxy-D-xylulose 5-phosphate = pyridoxine 5'-phosphate + phosphate + 2 H2O + H(+). It functions in the pathway cofactor biosynthesis; pyridoxine 5'-phosphate biosynthesis; pyridoxine 5'-phosphate from D-erythrose 4-phosphate: step 5/5. Functionally, catalyzes the complicated ring closure reaction between the two acyclic compounds 1-deoxy-D-xylulose-5-phosphate (DXP) and 3-amino-2-oxopropyl phosphate (1-amino-acetone-3-phosphate or AAP) to form pyridoxine 5'-phosphate (PNP) and inorganic phosphate. The protein is Pyridoxine 5'-phosphate synthase of Wolinella succinogenes (strain ATCC 29543 / DSM 1740 / CCUG 13145 / JCM 31913 / LMG 7466 / NCTC 11488 / FDC 602W) (Vibrio succinogenes).